A 250-amino-acid chain; its full sequence is 2,3-bisphosphoglycerate-dependent phosphoglycerate mutase (250 aa).

Substrate is bound by residues 10–17 (RHGESQWN), 23–24 (TG), Arg62, 89–92 (ERHY), Lys100, 116–117 (RR), and 185–186 (GN). Catalysis depends on His11, which acts as the Tele-phosphohistidine intermediate. Glu89 (proton donor/acceptor) is an active-site residue.

This sequence belongs to the phosphoglycerate mutase family. BPG-dependent PGAM subfamily. As to quaternary structure, homodimer.

It catalyses the reaction (2R)-2-phosphoglycerate = (2R)-3-phosphoglycerate. It functions in the pathway carbohydrate degradation; glycolysis; pyruvate from D-glyceraldehyde 3-phosphate: step 3/5. Its function is as follows. Catalyzes the interconversion of 2-phosphoglycerate and 3-phosphoglycerate. In Yersinia pseudotuberculosis serotype IB (strain PB1/+), this protein is 2,3-bisphosphoglycerate-dependent phosphoglycerate mutase.